A 261-amino-acid polypeptide reads, in one-letter code: Phosphate import ATP-binding protein PstB 1 (261 aa).

The 249-residue stretch at 8–256 folds into the ABC transporter domain; that stretch reads IKVNNLSFYY…PHDSRTREYV (249 aa). An ATP-binding site is contributed by 40-47; sequence GPSGCGKS.

The protein belongs to the ABC transporter superfamily. Phosphate importer (TC 3.A.1.7) family. The complex is composed of two ATP-binding proteins (PstB), two transmembrane proteins (PstC and PstA) and a solute-binding protein (PstS).

The protein localises to the cell inner membrane. It catalyses the reaction phosphate(out) + ATP + H2O = ADP + 2 phosphate(in) + H(+). Functionally, part of the ABC transporter complex PstSACB involved in phosphate import. Responsible for energy coupling to the transport system. This Nostoc sp. (strain PCC 7120 / SAG 25.82 / UTEX 2576) protein is Phosphate import ATP-binding protein PstB 1.